The primary structure comprises 372 residues: 4-hydroxy-3-methylbut-2-en-1-yl diphosphate synthase (flavodoxin) (372 aa).

Cys-270, Cys-273, Cys-305, and Glu-312 together coordinate [4Fe-4S] cluster.

Belongs to the IspG family. Requires [4Fe-4S] cluster as cofactor.

It carries out the reaction (2E)-4-hydroxy-3-methylbut-2-enyl diphosphate + oxidized [flavodoxin] + H2O + 2 H(+) = 2-C-methyl-D-erythritol 2,4-cyclic diphosphate + reduced [flavodoxin]. The protein operates within isoprenoid biosynthesis; isopentenyl diphosphate biosynthesis via DXP pathway; isopentenyl diphosphate from 1-deoxy-D-xylulose 5-phosphate: step 5/6. Functionally, converts 2C-methyl-D-erythritol 2,4-cyclodiphosphate (ME-2,4cPP) into 1-hydroxy-2-methyl-2-(E)-butenyl 4-diphosphate. The polypeptide is 4-hydroxy-3-methylbut-2-en-1-yl diphosphate synthase (flavodoxin) (Alteromonas mediterranea (strain DSM 17117 / CIP 110805 / LMG 28347 / Deep ecotype)).